The primary structure comprises 128 residues: Large ribosomal subunit protein eL22 (128 aa).

Belongs to the eukaryotic ribosomal protein eL22 family. As to quaternary structure, component of the large ribosomal subunit.

The protein resides in the cytoplasm. Its function is as follows. Component of the large ribosomal subunit. The ribosome is a large ribonucleoprotein complex responsible for the synthesis of proteins in the cell. This Xenopus tropicalis (Western clawed frog) protein is Large ribosomal subunit protein eL22 (rpl22).